The primary structure comprises 312 residues: Pyridoxal 5'-phosphate synthase subunit PDX1 (312 aa).

D43 is a binding site for D-ribose 5-phosphate. Residue K100 is the Schiff-base intermediate with D-ribose 5-phosphate of the active site. G172 serves as a coordination point for D-ribose 5-phosphate. R184 lines the D-glyceraldehyde 3-phosphate pocket. Residues G233 and 254 to 255 (GS) each bind D-ribose 5-phosphate.

It belongs to the PdxS/SNZ family.

The catalysed reaction is aldehydo-D-ribose 5-phosphate + D-glyceraldehyde 3-phosphate + L-glutamine = pyridoxal 5'-phosphate + L-glutamate + phosphate + 3 H2O + H(+). It functions in the pathway cofactor biosynthesis; pyridoxal 5'-phosphate biosynthesis. Its function is as follows. Catalyzes the formation of pyridoxal 5'-phosphate from ribose 5-phosphate (RBP), glyceraldehyde 3-phosphate (G3P) and ammonia. The ammonia is provided by PDX2. Can also use ribulose 5-phosphate and dihydroxyacetone phosphate as substrates, resulting from enzyme-catalyzed isomerization of RBP and G3P, respectively. Also plays an indirect role in resistance to singlet oxygen-generating photosensitizers. The chain is Pyridoxal 5'-phosphate synthase subunit PDX1 (PDX1) from Phaseolus vulgaris (Kidney bean).